A 990-amino-acid polypeptide reads, in one-letter code: Bacteriophage adsorption protein A (990 aa).

The first 27 residues, 1–27 (MKENNLNRVIGWSGLLLTSLLSTSALA), serve as a signal peptide directing secretion. TPR repeat units lie at residues 81–114 (IPLT…HPGD), 612–645 (ANAY…EPNN), and 646–679 (SNTQ…LPDD).

(Microbial infection) Interacts with N4 phage non-contractile sheath protein; this interaction is essential for viral adsorption to the host.

It localises to the cell outer membrane. (Microbial infection) Allows N4 phage attachment by binding to the viral non-contractile sheath protein. The sequence is that of Bacteriophage adsorption protein A (nfrA) from Escherichia coli (strain K12).